A 369-amino-acid polypeptide reads, in one-letter code: MTLEAIRYSPGSLQILDQLQLPEHCHYEALSSVQQASEAIRAMKVRGAPAIALVGCLSLAVELRAGAGGPGLAALVAFVRDQLRLLVAARPTAVNMARAARDLGQVAAQEAEREGATEETVRERVIRFAEDMLEKDLKDNRSIGDLGARHLLEQTNPRGGKVTVLTHCNTGALATAGYGTALGVIRSLHEMGRLEHTFCTETRPYNQGARLTAFELVYEQIPATLITDSMAAAAMAHRGVSAVVVGADRVVANGDTANKIGTYQLAIVAKHHGVPFYVAAPSSSCDLHLETGKEIVIEERPSQELTDLNGVRIAAQGIRVWNPAFDVTPHELITGGIITELGVFAPEELRGALSASVFSEGQTLDSPWV.

Met1 is modified (N-acetylmethionine). Residue Arg158 is modified to Omega-N-methylarginine. The active-site Proton donor is the Asp248. Ser366 is subject to Phosphoserine.

Belongs to the eIF-2B alpha/beta/delta subunits family. MtnA subfamily.

It localises to the cytoplasm. The protein localises to the nucleus. It catalyses the reaction 5-(methylsulfanyl)-alpha-D-ribose 1-phosphate = 5-(methylsulfanyl)-D-ribulose 1-phosphate. It participates in amino-acid biosynthesis; L-methionine biosynthesis via salvage pathway; L-methionine from S-methyl-5-thio-alpha-D-ribose 1-phosphate: step 1/6. Catalyzes the interconversion of methylthioribose-1-phosphate (MTR-1-P) into methylthioribulose-1-phosphate (MTRu-1-P). In Mus musculus (Mouse), this protein is Methylthioribose-1-phosphate isomerase (Mri1).